We begin with the raw amino-acid sequence, 62 residues long: UPF0434 protein SPO3421 (62 aa).

The protein belongs to the UPF0434 family.

The chain is UPF0434 protein SPO3421 from Ruegeria pomeroyi (strain ATCC 700808 / DSM 15171 / DSS-3) (Silicibacter pomeroyi).